The chain runs to 620 residues: Cilia- and flagella-associated protein 52 (620 aa).

WD repeat units lie at residues 62–106 (GHSN…LMAR), 109–150 (LHKG…AICG), 156–195 (LNVG…RKIW), 203–242 (QMKR…LADT), 288–327 (QLQG…ETLV), 330–369 (CHFE…ELLR), 372–411 (VPNM…LMYV), 415–454 (AHRI…QKLE), 459–498 (EHKS…RNQM), 500–539 (LANT…GIRE), 543–582 (SLSG…VTHV), and 585–620 (GHSG…PFPS).

Belongs to the CFAP52 family. In terms of assembly, microtubule inner protein component of sperm flagellar doublet microtubules. Interacts with BRCA2. Interacts with the CCT chaperonin complex. Interacts with HSP70. Interacts with AK8. Interacts with CFAP45. Interacts with DNAI1. Interacts with IQDC. In terms of tissue distribution, expressed in respiratory cells and sperm (at protein level).

Its subcellular location is the cytoplasm. It localises to the cytoskeleton. The protein resides in the cilium axoneme. The protein localises to the flagellum axoneme. Its function is as follows. Microtubule inner protein (MIP) part of the dynein-decorated doublet microtubules (DMTs) in cilia axoneme. Important for proper ciliary and flagellar beating. May act in cooperation with CFAP45 and axonemal dynein subunit DNAH11. May play a role in cell growth and/or survival. The polypeptide is Cilia- and flagella-associated protein 52 (CFAP52) (Sus scrofa (Pig)).